The following is a 284-amino-acid chain: UPF0294 protein VV1_1880 (284 aa).

It belongs to the UPF0294 family.

The protein resides in the cytoplasm. The chain is UPF0294 protein VV1_1880 from Vibrio vulnificus (strain CMCP6).